The chain runs to 118 residues: UPF0295 protein BA_0538/GBAA_0538/BAS0506 (118 aa).

The next 2 membrane-spanning stretches (helical) occupy residues 12-32 and 43-63; these read IRTFALSLVFIGLFIAYLGVF and FMMVGFLAVIASTVVYFWIGM.

This sequence belongs to the UPF0295 family.

It localises to the cell membrane. The polypeptide is UPF0295 protein BA_0538/GBAA_0538/BAS0506 (Bacillus anthracis).